Consider the following 88-residue polypeptide: Sapecin-B (88 aa).

The N-terminal stretch at 1–24 (MKFLTSLLLLFVVVMVSAVNLSMA) is a signal peptide. A propeptide spanning residues 25–54 (KESANQLTERLQELDGAAIQEPAELNRHKR) is cleaved from the precursor. Cystine bridges form between Cys57–Cys78, Cys64–Cys84, and Cys68–Cys86.

The protein belongs to the invertebrate defensin family. Type 1 subfamily. In terms of tissue distribution, hemocytes and fat body.

Its subcellular location is the secreted. Its function is as follows. Sapecins, which are potent bactericidal proteins, are produced in response to injury. Sapecin B is cytotoxic to Gram-positive bacteria. In Sarcophaga peregrina (Flesh fly), this protein is Sapecin-B.